Consider the following 396-residue polypeptide: L-lactate dehydrogenase (396 aa).

Positions 1–380 constitute an FMN hydroxy acid dehydrogenase domain; that stretch reads MIISAASDYR…SGDSLVQELG (380 aa). Tyrosine 24 provides a ligand contact to substrate. Residues serine 106 and glutamine 127 each coordinate FMN. Tyrosine 129 provides a ligand contact to substrate. Threonine 155 contacts FMN. Arginine 164 is a substrate binding site. Position 251 (lysine 251) interacts with FMN. Histidine 275 functions as the Proton acceptor in the catalytic mechanism. Arginine 278 provides a ligand contact to substrate. 306–330 is a binding site for FMN; it reads DSGIRNGLDVVRMIALGADTVLLGR.

It belongs to the FMN-dependent alpha-hydroxy acid dehydrogenase family. It depends on FMN as a cofactor.

The protein localises to the cell inner membrane. The enzyme catalyses (S)-lactate + A = pyruvate + AH2. Functionally, catalyzes the conversion of L-lactate to pyruvate. Is coupled to the respiratory chain. This is L-lactate dehydrogenase from Salmonella enteritidis PT4 (strain P125109).